The following is a 276-amino-acid chain: Glutamate racemase (276 aa).

Residues 10–11 and 42–43 contribute to the substrate site; these read DS and YG. C74 functions as the Proton donor/acceptor in the catalytic mechanism. 75 to 76 lines the substrate pocket; sequence NT. Catalysis depends on C185, which acts as the Proton donor/acceptor. Substrate is bound at residue 186 to 187; the sequence is TH.

It belongs to the aspartate/glutamate racemases family.

The catalysed reaction is L-glutamate = D-glutamate. It functions in the pathway cell wall biogenesis; peptidoglycan biosynthesis. Provides the (R)-glutamate required for cell wall biosynthesis. This Levilactobacillus brevis (Lactobacillus brevis) protein is Glutamate racemase.